Here is a 234-residue protein sequence, read N- to C-terminus: UDP-2,3-diacylglucosamine hydrolase (234 aa).

Mn(2+)-binding residues include D9, H11, D42, N80, and H115. 80 to 81 (NR) contacts substrate. Substrate is bound by residues D123, S161, K165, K168, and H196. Residues H196 and H198 each coordinate Mn(2+).

Belongs to the LpxH family. It depends on Mn(2+) as a cofactor.

Its subcellular location is the cell inner membrane. It catalyses the reaction UDP-2-N,3-O-bis[(3R)-3-hydroxytetradecanoyl]-alpha-D-glucosamine + H2O = 2-N,3-O-bis[(3R)-3-hydroxytetradecanoyl]-alpha-D-glucosaminyl 1-phosphate + UMP + 2 H(+). Its pathway is glycolipid biosynthesis; lipid IV(A) biosynthesis; lipid IV(A) from (3R)-3-hydroxytetradecanoyl-[acyl-carrier-protein] and UDP-N-acetyl-alpha-D-glucosamine: step 4/6. Hydrolyzes the pyrophosphate bond of UDP-2,3-diacylglucosamine to yield 2,3-diacylglucosamine 1-phosphate (lipid X) and UMP by catalyzing the attack of water at the alpha-P atom. Involved in the biosynthesis of lipid A, a phosphorylated glycolipid that anchors the lipopolysaccharide to the outer membrane of the cell. The chain is UDP-2,3-diacylglucosamine hydrolase from Haemophilus ducreyi (strain 35000HP / ATCC 700724).